Here is a 158-residue protein sequence, read N- to C-terminus: MKISLSLQQDFRSPELELKRAQLKKIIETTLRHVGYKEDCEIGIACVDLEESHQLNLQYREKDKPTNVLSFPSDIPEEVLPMLDALPLGDLVICIPVVLQEALEQKKTAQNHFAHLLVHGVLHLLGYDHETSDEDAEEMEGLEIEILAKLNIANPYQE.

Positions 119, 123, and 129 each coordinate Zn(2+).

Belongs to the endoribonuclease YbeY family. Zn(2+) is required as a cofactor.

The protein localises to the cytoplasm. Functionally, single strand-specific metallo-endoribonuclease involved in late-stage 70S ribosome quality control and in maturation of the 3' terminus of the 16S rRNA. This chain is Endoribonuclease YbeY, found in Acinetobacter baumannii (strain AB307-0294).